Here is a 303-residue protein sequence, read N- to C-terminus: MEGIIATFRSPGAELIELGTLTVRWYGILIAISVLIGLKLSTRLGSYRNINPGIINDLMPILILSSIFGARFYYVSFEWNNYNGVNFWSKVHLLGLQIPIPSFLEIWNGGIAIHGALIMGTISIILFCRIKKQRFWDVLDVLVPSVALGQAIGRWGNFFNNEAFGLPTNQPWKLFIPFSSRPESFSDQSYFHPTFLYESLWNICIFLILIFLFRLNIRGLMKLPSGALSCIYLITYSLGRIWIEGLRIDPLCLGGSPPFCEGGLRIAQLISFLLICLGSFGLWWIYQSKRKMPNFGITRNRKK.

3 helical membrane-spanning segments follow: residues 18–38, 50–70, and 106–126; these read LGTLTVRWYGILIAISVLIGL, INPGIINDLMPILILSSIFGA, and IWNGGIAIHGALIMGTISIIL. Arg154 is a binding site for a 1,2-diacyl-sn-glycero-3-phospho-(1'-sn-glycerol). 3 helical membrane-spanning segments follow: residues 193–213, 223–243, and 266–286; these read PTFLYESLWNICIFLILIFLF, LPSGALSCIYLITYSLGRIWI, and IAQLISFLLICLGSFGLWWIY.

The protein belongs to the Lgt family.

Its subcellular location is the cell inner membrane. It catalyses the reaction L-cysteinyl-[prolipoprotein] + a 1,2-diacyl-sn-glycero-3-phospho-(1'-sn-glycerol) = an S-1,2-diacyl-sn-glyceryl-L-cysteinyl-[prolipoprotein] + sn-glycerol 1-phosphate + H(+). Its pathway is protein modification; lipoprotein biosynthesis (diacylglyceryl transfer). Its function is as follows. Catalyzes the transfer of the diacylglyceryl group from phosphatidylglycerol to the sulfhydryl group of the N-terminal cysteine of a prolipoprotein, the first step in the formation of mature lipoproteins. The protein is Phosphatidylglycerol--prolipoprotein diacylglyceryl transferase of Prochlorococcus marinus (strain SARG / CCMP1375 / SS120).